The chain runs to 81 residues: Short neurotoxin 1 (81 aa).

The signal sequence occupies residues 1-21; the sequence is MKTLLLSPVVVTIVCLDLGYT. 4 disulfide bridges follow: cysteine 24–cysteine 43, cysteine 38–cysteine 60, cysteine 62–cysteine 73, and cysteine 74–cysteine 79.

It belongs to the three-finger toxin family. Short-chain subfamily. Type I alpha-neurotoxin sub-subfamily. Expressed by the venom gland.

The protein resides in the secreted. Its function is as follows. Binds to muscle nicotinic acetylcholine receptor (nAChR) and inhibit acetylcholine from binding to the receptor, thereby impairing neuromuscular transmission. The polypeptide is Short neurotoxin 1 (Hydrophis peronii (Spiny-headed seasnake)).